Consider the following 335-residue polypeptide: GTPase Obg (335 aa).

Positions methionine 1–isoleucine 158 constitute an Obg domain. The region spanning alanine 159–serine 334 is the OBG-type G domain. GTP contacts are provided by residues glycine 165 to serine 172, phenylalanine 190 to histidine 194, aspartate 215 to glycine 218, asparagine 285 to aspartate 288, and serine 315 to leucine 317. Residues serine 172 and threonine 192 each coordinate Mg(2+).

This sequence belongs to the TRAFAC class OBG-HflX-like GTPase superfamily. OBG GTPase family. In terms of assembly, monomer. Requires Mg(2+) as cofactor.

It is found in the cytoplasm. In terms of biological role, an essential GTPase which binds GTP, GDP and possibly (p)ppGpp with moderate affinity, with high nucleotide exchange rates and a fairly low GTP hydrolysis rate. Plays a role in control of the cell cycle, stress response, ribosome biogenesis and in those bacteria that undergo differentiation, in morphogenesis control. This chain is GTPase Obg, found in Chlamydia muridarum (strain MoPn / Nigg).